Consider the following 614-residue polypeptide: Nuclear receptor subfamily 1 group D member 1 (614 aa).

Polar residues predominate over residues 1 to 48 (MTTLDSNNNTGGVITYIGSSGSSPNRTSPESLYSDSSNGSFQSLTQGC). The required for phosphorylation by CSNK1E and cytoplasmic localization stretch occupies residues 1–70 (MTTLDSNNNT…TQDPARSFGS (70 aa)). The interval 1–120 (MTTLDSNNNT…GNRVSPSKST (120 aa)) is disordered. The tract at residues 1 to 129 (MTTLDSNNNT…TSNITKLNGM (129 aa)) is modulating. The tract at residues 49–285 (PTYFPPSPTG…PPRSPSPEPT (237 aa)) is crucial for activation of GJA1. Phosphoserine; by GSK3-beta occurs at positions 55 and 59. Residues 69–103 (GSIPPSLGDDGSPSSSSSSSSSSSSSFYNGSPPGG) are compositionally biased toward low complexity. Residues 130–206 (VLLCKVCGDV…VGMSRDAVRF (77 aa)) constitute a DNA-binding region (nuclear receptor). 2 NR C4-type zinc fingers span residues 133-153 (CKVC…CEGC) and 170-194 (CLKN…FKKC). Lysine 192 and lysine 193 each carry N6-acetyllysine; by KAT5. The disordered stretch occupies residues 233–286 (SSQCPLETPPTQHPTPGPMGPSPPPAPAPSPLVGFSQFPQQLTPPRSPSPEPTV). Pro residues predominate over residues 239-262 (ETPPTQHPTPGPMGPSPPPAPAPS). Threonine 275 carries the post-translational modification Phosphothreonine; by CDK1. Positions 285–614 (TVEDVISQVA…KLLSFRVDAQ (330 aa)) constitute an NR LBD domain. Cysteine 418 contacts heme. The residue at position 591 (lysine 591) is an N6-acetyllysine. Histidine 602 contributes to the heme binding site.

The protein belongs to the nuclear hormone receptor family. NR1 subfamily. As to quaternary structure, binds DNA as a monomer or a homodimer. Interacts with C1D, NR2E3, SP1 and ZNHIT1. Interacts with OPHN1 (via C-terminus). Interacts with PER2; the interaction associates PER2 to BMAL1 promoter region. Interacts with CRY1. Interacts with CCAR2. Interacts with SIAH2. Interacts with FBXW7 and CDK1. Interacts with HUWE1. Interacts with NR0B2. Interacts with NFIL3. Interacts (via domain NR LBD) with HSP90AA1 and HSP90AB1. Post-translationally, ubiquitinated, leading to its proteasomal degradation. Ubiquitinated by the SCF(FBXW7) complex when phosphorylated by CDK1 leading to its proteasomal degradation. Ubiquitinated by SIAH2; leading to its proteasomal degradation. Rapidly ubiquitinated in response to inflammatory triggers and sumoylation is a prerequisite to its ubiquitination. In terms of processing, sumoylated by UBE2I, desumoylated by SENP1, and sumoylation is a prerequisite to its ubiquitination. Phosphorylated by CSNK1E; phosphorylation enhances its cytoplasmic localization. Post-translationally, undergoes lysosome-mediated degradation in a time-dependent manner in the liver. In terms of tissue distribution, expressed in all tissues and cell lines examined. Expressed at high levels in some squamous carcinoma cell lines.

The protein resides in the nucleus. It is found in the cytoplasm. Its subcellular location is the cell projection. The protein localises to the dendrite. It localises to the dendritic spine. Transcriptional repressor which coordinates circadian rhythm and metabolic pathways in a heme-dependent manner. Integral component of the complex transcription machinery that governs circadian rhythmicity and forms a critical negative limb of the circadian clock by directly repressing the expression of core clock components BMAL1, CLOCK and CRY1. Also regulates genes involved in metabolic functions, including lipid and bile acid metabolism, adipogenesis, gluconeogenesis and the macrophage inflammatory response. Acts as a receptor for heme which stimulates its interaction with the NCOR1/HDAC3 corepressor complex, enhancing transcriptional repression. Recognizes two classes of DNA response elements within the promoter of its target genes and can bind to DNA as either monomers or homodimers, depending on the nature of the response element. Binds as a monomer to a response element composed of the consensus half-site motif 5'-[A/G]GGTCA-3' preceded by an A/T-rich 5' sequence (RevRE), or as a homodimer to a direct repeat of the core motif spaced by two nucleotides (RevDR-2). Acts as a potent competitive repressor of ROR alpha (RORA) function and regulates the levels of its ligand heme by repressing the expression of PPARGC1A, a potent inducer of heme synthesis. Regulates lipid metabolism by repressing the expression of APOC3 and by influencing the activity of sterol response element binding proteins (SREBPs); represses INSIG2 which interferes with the proteolytic activation of SREBPs which in turn govern the rhythmic expression of enzymes with key functions in sterol and fatty acid synthesis. Regulates gluconeogenesis via repression of G6PC1 and PEPCK and adipocyte differentiation via repression of PPARG. Regulates glucagon release in pancreatic alpha-cells via the AMPK-NAMPT-SIRT1 pathway and the proliferation, glucose-induced insulin secretion and expression of key lipogenic genes in pancreatic-beta cells. Positively regulates bile acid synthesis by increasing hepatic expression of CYP7A1 via repression of NR0B2 and NFIL3 which are negative regulators of CYP7A1. Modulates skeletal muscle oxidative capacity by regulating mitochondrial biogenesis and autophagy; controls mitochondrial biogenesis and respiration by interfering with the STK11-PRKAA1/2-SIRT1-PPARGC1A signaling pathway. Represses the expression of SERPINE1/PAI1, an important modulator of cardiovascular disease and the expression of inflammatory cytokines and chemokines in macrophages. Represses gene expression at a distance in macrophages by inhibiting the transcription of enhancer-derived RNAs (eRNAs). Plays a role in the circadian regulation of body temperature and negatively regulates thermogenic transcriptional programs in brown adipose tissue (BAT); imposes a circadian oscillation in BAT activity, increasing body temperature when awake and depressing thermogenesis during sleep. In concert with NR2E3, regulates transcriptional networks critical for photoreceptor development and function. In addition to its activity as a repressor, can also act as a transcriptional activator. In the ovarian granulosa cells acts as a transcriptional activator of STAR which plays a role in steroid biosynthesis. In collaboration with SP1, activates GJA1 transcription in a heme-independent manner. Represses the transcription of CYP2B10, CYP4A10 and CYP4A14. Represses the transcription of CES2. Represses and regulates the circadian expression of TSHB in a NCOR1-dependent manner. Negatively regulates the protein stability of NR3C1 and influences the time-dependent subcellular distribution of NR3C1, thereby affecting its transcriptional regulatory activity. Plays a critical role in the circadian control of neutrophilic inflammation in the lung; under resting, non-stress conditions, acts as a rhythmic repressor to limit inflammatory activity whereas in the presence of inflammatory triggers undergoes ubiquitin-mediated degradation thereby relieving inhibition of the inflammatory response. Plays a key role in the circadian regulation of microglial activation and neuroinflammation; suppresses microglial activation through the NF-kappaB pathway in the central nervous system. Plays a role in the regulation of the diurnal rhythms of lipid and protein metabolism in the skeletal muscle via transcriptional repression of genes controlling lipid and amino acid metabolism in the muscle. The protein is Nuclear receptor subfamily 1 group D member 1 (NR1D1) of Ovis aries (Sheep).